We begin with the raw amino-acid sequence, 182 residues long: Ribosome-recycling factor (182 aa).

Belongs to the RRF family.

It localises to the cytoplasm. Functionally, responsible for the release of ribosomes from messenger RNA at the termination of protein biosynthesis. May increase the efficiency of translation by recycling ribosomes from one round of translation to another. This is Ribosome-recycling factor from Prochlorococcus marinus (strain AS9601).